We begin with the raw amino-acid sequence, 274 residues long: Putative pyruvate, phosphate dikinase regulatory protein 1 (274 aa).

149 to 156 (GISRTSKT) is an ADP binding site.

This sequence belongs to the pyruvate, phosphate/water dikinase regulatory protein family. PDRP subfamily.

The enzyme catalyses N(tele)-phospho-L-histidyl/L-threonyl-[pyruvate, phosphate dikinase] + ADP = N(tele)-phospho-L-histidyl/O-phospho-L-threonyl-[pyruvate, phosphate dikinase] + AMP + H(+). The catalysed reaction is N(tele)-phospho-L-histidyl/O-phospho-L-threonyl-[pyruvate, phosphate dikinase] + phosphate + H(+) = N(tele)-phospho-L-histidyl/L-threonyl-[pyruvate, phosphate dikinase] + diphosphate. Its function is as follows. Bifunctional serine/threonine kinase and phosphorylase involved in the regulation of the pyruvate, phosphate dikinase (PPDK) by catalyzing its phosphorylation/dephosphorylation. The sequence is that of Putative pyruvate, phosphate dikinase regulatory protein 1 from Listeria welshimeri serovar 6b (strain ATCC 35897 / DSM 20650 / CCUG 15529 / CIP 8149 / NCTC 11857 / SLCC 5334 / V8).